A 454-amino-acid chain; its full sequence is Tyrosine aminotransferase (454 aa).

Met1 is subject to N-acetylmethionine. Lys280 carries the N6-(pyridoxal phosphate)lysine modification. Ser448 bears the Phosphoserine mark.

It belongs to the class-I pyridoxal-phosphate-dependent aminotransferase family. As to quaternary structure, homodimer. Requires pyridoxal 5'-phosphate as cofactor.

The catalysed reaction is L-tyrosine + 2-oxoglutarate = 3-(4-hydroxyphenyl)pyruvate + L-glutamate. It functions in the pathway amino-acid degradation; L-phenylalanine degradation; acetoacetate and fumarate from L-phenylalanine: step 2/6. Its function is as follows. Transaminase involved in tyrosine breakdown. Converts tyrosine to p-hydroxyphenylpyruvate. Can catalyze the reverse reaction, using glutamic acid, with 2-oxoglutarate as cosubstrate (in vitro). Has much lower affinity and transaminase activity for phenylalanine. The sequence is that of Tyrosine aminotransferase (Tat) from Mus musculus (Mouse).